The chain runs to 164 residues: 6,7-dimethyl-8-ribityllumazine synthase (164 aa).

Residues F22, A56–E58, and A80–I82 each bind 5-amino-6-(D-ribitylamino)uracil. D85–T86 contributes to the (2S)-2-hydroxy-3-oxobutyl phosphate binding site. The active-site Proton donor is H88. L113 lines the 5-amino-6-(D-ribitylamino)uracil pocket. (2S)-2-hydroxy-3-oxobutyl phosphate is bound at residue R127.

It belongs to the DMRL synthase family.

It catalyses the reaction (2S)-2-hydroxy-3-oxobutyl phosphate + 5-amino-6-(D-ribitylamino)uracil = 6,7-dimethyl-8-(1-D-ribityl)lumazine + phosphate + 2 H2O + H(+). The protein operates within cofactor biosynthesis; riboflavin biosynthesis; riboflavin from 2-hydroxy-3-oxobutyl phosphate and 5-amino-6-(D-ribitylamino)uracil: step 1/2. Catalyzes the formation of 6,7-dimethyl-8-ribityllumazine by condensation of 5-amino-6-(D-ribitylamino)uracil with 3,4-dihydroxy-2-butanone 4-phosphate. This is the penultimate step in the biosynthesis of riboflavin. The sequence is that of 6,7-dimethyl-8-ribityllumazine synthase from Gemmatimonas aurantiaca (strain DSM 14586 / JCM 11422 / NBRC 100505 / T-27).